The sequence spans 310 residues: Dermonecrotic toxin LiSicTox-alphaII2 (310 aa).

Residues 1-18 (MLLRIALILGCWSILSEG) form the signal peptide. Residues 19–26 (AENDIAER) constitute a propeptide that is removed on maturation. The active site involves His38. 2 residues coordinate Mg(2+): Glu58 and Asp60. The active-site Nucleophile is the His74. 2 disulfide bridges follow: Cys78–Cys84 and Cys80–Cys224. The N-linked (GlcNAc...) asparagine glycan is linked to Asn99. Asp118 lines the Mg(2+) pocket.

The protein belongs to the arthropod phospholipase D family. Class II subfamily. Mg(2+) is required as a cofactor. Expressed by the venom gland.

It localises to the secreted. It carries out the reaction an N-(acyl)-sphingosylphosphocholine = an N-(acyl)-sphingosyl-1,3-cyclic phosphate + choline. The enzyme catalyses an N-(acyl)-sphingosylphosphoethanolamine = an N-(acyl)-sphingosyl-1,3-cyclic phosphate + ethanolamine. It catalyses the reaction a 1-acyl-sn-glycero-3-phosphocholine = a 1-acyl-sn-glycero-2,3-cyclic phosphate + choline. The catalysed reaction is a 1-acyl-sn-glycero-3-phosphoethanolamine = a 1-acyl-sn-glycero-2,3-cyclic phosphate + ethanolamine. Dermonecrotic toxins cleave the phosphodiester linkage between the phosphate and headgroup of certain phospholipids (sphingolipid and lysolipid substrates), forming an alcohol (often choline) and a cyclic phosphate. This toxin acts on sphingomyelin (SM). It may also act on ceramide phosphoethanolamine (CPE), lysophosphatidylcholine (LPC) and lysophosphatidylethanolamine (LPE), but not on lysophosphatidylserine (LPS), and lysophosphatidylglycerol (LPG). It acts by transphosphatidylation, releasing exclusively cyclic phosphate products as second products. Induces dermonecrosis, hemolysis, increased vascular permeability, edema, inflammatory response, and platelet aggregation. In Loxosceles intermedia (Brown spider), this protein is Dermonecrotic toxin LiSicTox-alphaII2.